A 201-amino-acid chain; its full sequence is MTAQASNIVWHKASVDRESIEKERGHKSVIIWFTGLSGSGKSTLANALNVALFKKGLATYVLDGDNIRHGLCNDLGFSDSDREENIRRIGEVAKLFLDAGVIVLTAFVSPFRSDREKARKLVKENDFLEIYCAANLDICETRDTKGLYAKARAGEIKDFTGISSPYEEPENPDLKIDTGLKDIDQCVEEVISKLIELNLVK.

35–42 (GLSGSGKS) provides a ligand contact to ATP. The Phosphoserine intermediate role is filled by Ser-109.

It belongs to the APS kinase family.

It carries out the reaction adenosine 5'-phosphosulfate + ATP = 3'-phosphoadenylyl sulfate + ADP + H(+). It functions in the pathway sulfur metabolism; hydrogen sulfide biosynthesis; sulfite from sulfate: step 2/3. Catalyzes the synthesis of activated sulfate. The polypeptide is Adenylyl-sulfate kinase (Prochlorococcus marinus (strain SARG / CCMP1375 / SS120)).